The following is a 120-amino-acid chain: Photosystem II extrinsic protein U (120 aa).

Positions 1–29 are cleaved as a signal peptide; the sequence is MKRLLSLLTGVLVMTGLLMALIFPQSAYA.

Belongs to the PsbU family. PSII is composed of 1 copy each of membrane proteins PsbA, PsbB, PsbC, PsbD, PsbE, PsbF, PsbH, PsbI, PsbJ, PsbK, PsbL, PsbM, PsbT, PsbX, PsbY, Psb30/Ycf12, peripheral proteins PsbO, CyanoQ (PsbQ), PsbU, PsbV and a large number of cofactors. It forms dimeric complexes.

Its subcellular location is the cellular thylakoid membrane. Functionally, one of the extrinsic, lumenal subunits of photosystem II (PSII). PSII is a light-driven water plastoquinone oxidoreductase, using light energy to abstract electrons from H(2)O, generating a proton gradient subsequently used for ATP formation. The extrinsic proteins stabilize the structure of photosystem II oxygen-evolving complex (OEC), the ion environment of oxygen evolution and protect the OEC against heat-induced inactivation. In Prochlorococcus marinus (strain MIT 9303), this protein is Photosystem II extrinsic protein U.